Here is a 123-residue protein sequence, read N- to C-terminus: PCNA-associated factor (123 aa).

The disordered stretch occupies residues 1-123 (MVRTKADCAG…SEEAADSGDE (123 aa)). Residues 26 to 37 (RKTFGSSSSGSN) carry the D-box motif. The PIP-box motif lies at 66-77 (QKGIGDFFGSPS). The KEN box signature appears at 83–85 (KEN). The Initiation motif motif lies at 93 to 105 (EAGGSGAGKKPRK). Positions 113–123 (PSEEAADSGDE) are enriched in acidic residues.

In terms of assembly, interacts with pcna.

The protein resides in the nucleus. It localises to the cytoplasm. The protein localises to the perinuclear region. Its function is as follows. PCNA-binding protein that acts as a regulator of DNA repair during DNA replication. Following DNA damage, the interaction with pcna is disrupted, facilitating the interaction between monoubiquitinated pcna and the translesion DNA synthesis DNA polymerase eta (polh) at stalled replisomes, facilitating the bypass of replication-fork-blocking lesions. Also acts as a regulator of centrosome number. The sequence is that of PCNA-associated factor from Xenopus laevis (African clawed frog).